The following is a 484-amino-acid chain: Schwannomin-interacting protein 1 (484 aa).

Residues 1–28 (MERSEQRVRAAWDCDPGKQADRDYREDG) are compositionally biased toward basic and acidic residues. 4 disordered regions span residues 1–74 (MERS…VSAL), 86–220 (KKVI…PPMD), 232–258 (QFRE…ERES), and 305–350 (SGSD…ESLD). Residues 33 to 67 (SDAGSSSSSRASSQSNSTKVTPCSECKSSSSPGGS) are compositionally biased toward low complexity. Positions 92 to 106 (WAPEEDGEEEEEEDD) are enriched in acidic residues. Positions 107 to 120 (RGYRDDGCPAREPG) are enriched in basic and acidic residues. A compositionally biased stretch (low complexity) spans 123-137 (SARIGSSGSGSRSAA). Residues 150-159 (HPHDPQDLRH) are compositionally biased toward basic and acidic residues. A compositionally biased stretch (polar residues) spans 239–252 (RNQGQARTNSTSAQ). Over residues 306-320 (GSDKDSDADDSKTET) the composition is skewed to basic and acidic residues. A compositionally biased stretch (polar residues) spans 321 to 332 (SLDTPLSPMSKQ). Acidic residues predominate over residues 341–350 (TTEEESESLD). Residues 421 to 455 (IGQLQVIVNDLHSQIESLNEELVQLLLIRDELHTE) adopt a coiled-coil conformation.

Belongs to the SCHIP1 family. As to quaternary structure, homooligomer (via coiled coil domain). Interacts with NF2; the interaction is direct. Interacts with ANK3.

The protein is Schwannomin-interacting protein 1 of Mus musculus (Mouse).